A 239-amino-acid chain; its full sequence is tRNA (guanine-N(7)-)-methyltransferase (239 aa).

E69, E94, D121, and D144 together coordinate S-adenosyl-L-methionine. Residue D144 is part of the active site. Substrate is bound at residue K148. The interaction with RNA stretch occupies residues 150–155 (RHNKRR). Substrate-binding positions include D180 and 217–220 (TKFE).

It belongs to the class I-like SAM-binding methyltransferase superfamily. TrmB family. In terms of assembly, monomer.

It catalyses the reaction guanosine(46) in tRNA + S-adenosyl-L-methionine = N(7)-methylguanosine(46) in tRNA + S-adenosyl-L-homocysteine. Its pathway is tRNA modification; N(7)-methylguanine-tRNA biosynthesis. Catalyzes the formation of N(7)-methylguanine at position 46 (m7G46) in tRNA. The polypeptide is tRNA (guanine-N(7)-)-methyltransferase (Pectobacterium atrosepticum (strain SCRI 1043 / ATCC BAA-672) (Erwinia carotovora subsp. atroseptica)).